Consider the following 270-residue polypeptide: Diaminopimelate epimerase (270 aa).

3 residues coordinate substrate: Asn15, Gln49, and Asn66. Cys75 (proton donor) is an active-site residue. Residues 76–77 (GN), Asn155, Asn187, and 204–205 (ER) each bind substrate. Cys213 (proton acceptor) is an active-site residue. A substrate-binding site is contributed by 214–215 (GS).

This sequence belongs to the diaminopimelate epimerase family. As to quaternary structure, homodimer.

The protein localises to the cytoplasm. It carries out the reaction (2S,6S)-2,6-diaminopimelate = meso-2,6-diaminopimelate. It participates in amino-acid biosynthesis; L-lysine biosynthesis via DAP pathway; DL-2,6-diaminopimelate from LL-2,6-diaminopimelate: step 1/1. In terms of biological role, catalyzes the stereoinversion of LL-2,6-diaminopimelate (L,L-DAP) to meso-diaminopimelate (meso-DAP), a precursor of L-lysine and an essential component of the bacterial peptidoglycan. The sequence is that of Diaminopimelate epimerase from Rickettsia typhi (strain ATCC VR-144 / Wilmington).